The chain runs to 86 residues: Small ribosomal subunit protein uS17 (86 aa).

This sequence belongs to the universal ribosomal protein uS17 family. Part of the 30S ribosomal subunit.

One of the primary rRNA binding proteins, it binds specifically to the 5'-end of 16S ribosomal RNA. This Streptococcus pyogenes serotype M3 (strain ATCC BAA-595 / MGAS315) protein is Small ribosomal subunit protein uS17.